A 396-amino-acid polypeptide reads, in one-letter code: Tryptophan synthase beta chain 1 (396 aa).

Lysine 86 is modified (N6-(pyridoxal phosphate)lysine).

It belongs to the TrpB family. As to quaternary structure, tetramer of two alpha and two beta chains. It depends on pyridoxal 5'-phosphate as a cofactor.

It catalyses the reaction (1S,2R)-1-C-(indol-3-yl)glycerol 3-phosphate + L-serine = D-glyceraldehyde 3-phosphate + L-tryptophan + H2O. It functions in the pathway amino-acid biosynthesis; L-tryptophan biosynthesis; L-tryptophan from chorismate: step 5/5. Functionally, the beta subunit is responsible for the synthesis of L-tryptophan from indole and L-serine. The sequence is that of Tryptophan synthase beta chain 1 (trpB1) from Vibrio parahaemolyticus serotype O3:K6 (strain RIMD 2210633).